The chain runs to 87 residues: Small ribosomal subunit protein uS15c (87 aa).

This sequence belongs to the universal ribosomal protein uS15 family. As to quaternary structure, part of the 30S ribosomal subunit.

It is found in the plastid. It localises to the chloroplast. In Coffea arabica (Arabian coffee), this protein is Small ribosomal subunit protein uS15c (rps15).